A 128-amino-acid polypeptide reads, in one-letter code: LIM domain-containing protein 2 (128 aa).

Met-1 is modified (N-acetylmethionine). Residues 1–25 (MFQAAGAAQATPSHEAKGGGSSSTV) form a disordered region. One can recognise an LIM zinc-binding domain in the interval 39–99 (ETCAACQKTV…KPHFQQLFKS (61 aa)). Zn(2+) contacts are provided by Cys-41, Cys-44, His-62, Cys-65, Cys-68, Cys-71, Cys-89, and His-92.

In terms of assembly, interacts with ILK.

Its subcellular location is the cytoplasm. The protein localises to the nucleus. Acts as an activator of the protein-kinase ILK, thereby regulating cell motility. In Bos taurus (Bovine), this protein is LIM domain-containing protein 2 (LIMD2).